The sequence spans 99 residues: Nucleoid-associated protein SSA_0326 (99 aa).

Residues M1 to Q15 show a composition bias toward low complexity. Residues M1–A23 are disordered.

It belongs to the YbaB/EbfC family. Homodimer.

The protein resides in the cytoplasm. It localises to the nucleoid. In terms of biological role, binds to DNA and alters its conformation. May be involved in regulation of gene expression, nucleoid organization and DNA protection. The protein is Nucleoid-associated protein SSA_0326 of Streptococcus sanguinis (strain SK36).